The primary structure comprises 261 residues: 3-hydroxyacyl-CoA dehydrogenase type-2 (261 aa).

N-acetylalanine is present on alanine 2. The NAD(+) site is built by serine 20, leucine 22, and aspartate 41. The residue at position 53 (lysine 53) is an N6-acetyllysine; alternate. N6-succinyllysine; alternate is present on lysine 53. Residue valine 65 coordinates NAD(+). Lysine 69 is subject to N6-acetyllysine. Position 91 (cysteine 91) interacts with NAD(+). 2 positions are modified to N6-acetyllysine: lysine 99 and lysine 105. Serine 155 contacts substrate. 4 residues coordinate NAD(+): tyrosine 168, lysine 172, phenylalanine 201, and threonine 203. Residue tyrosine 168 is the Proton acceptor of the active site. The residue at position 212 (lysine 212) is an N6-acetyllysine; alternate. Position 212 is an N6-succinyllysine; alternate (lysine 212).

Belongs to the short-chain dehydrogenases/reductases (SDR) family. Homotetramer. Component of mitochondrial ribonuclease P, a complex composed of TRMT10C/MRPP1, HSD17B10/MRPP2 and PRORP/MRPP3. Interacts with TRMT10C/MRPP1; forming the MRPP1-MRPP2 subcomplex of the mitochondrial ribonuclease P complex.

The protein localises to the mitochondrion. It localises to the mitochondrion matrix. The protein resides in the mitochondrion nucleoid. It carries out the reaction a (3S)-3-hydroxyacyl-CoA + NAD(+) = a 3-oxoacyl-CoA + NADH + H(+). The enzyme catalyses (2S,3S)-3-hydroxy-2-methylbutanoyl-CoA + NAD(+) = 2-methyl-3-oxobutanoyl-CoA + NADH + H(+). The catalysed reaction is testosterone + NAD(+) = androst-4-ene-3,17-dione + NADH + H(+). It catalyses the reaction 5alpha-androstane-3alpha,17beta-diol + NAD(+) = 17beta-hydroxy-5alpha-androstan-3-one + NADH + H(+). It carries out the reaction 17beta-estradiol + NAD(+) = estrone + NADH + H(+). The enzyme catalyses cholate + NAD(+) = 3alpha,12alpha-dihydroxy-7-oxo-5beta-cholanate + NADH + H(+). The catalysed reaction is (3S)-3-hydroxybutanoyl-CoA + NAD(+) = acetoacetyl-CoA + NADH + H(+). It catalyses the reaction (3S)-hydroxyoctanoyl-CoA + NAD(+) = 3-oxooctanoyl-CoA + NADH + H(+). It carries out the reaction (3S)-hydroxyhexadecanoyl-CoA + NAD(+) = 3-oxohexadecanoyl-CoA + NADH + H(+). The enzyme catalyses 17beta-hydroxy-5alpha-androstan-3-one + NAD(+) = 5alpha-androstan-3,17-dione + NADH + H(+). The catalysed reaction is 5alpha-pregnan-20beta-ol-3-one + NAD(+) = 5alpha-pregnane-3,20-dione + NADH + H(+). It catalyses the reaction 3alpha-hydroxy-5alpha-pregnan-20-one + NAD(+) = 5alpha-pregnane-3,20-dione + NADH + H(+). It carries out the reaction cortisone + NAD(+) = 17alpha-hydroxypregn-4-en-3,11,20-trione-21-al + NADH + H(+). The enzyme catalyses 11-dehydrocorticosterone + NAD(+) = pregn-4-ene-3,11,20,21-tetraone + NADH + H(+). The catalysed reaction is cortisol + NAD(+) = 11beta,17alpha-dihydroxypregn-4-ene-3,20,21-trione + NADH + H(+). It catalyses the reaction chenodeoxycholate + NAD(+) = 7-oxolithocholate + NADH + H(+). It carries out the reaction ursodeoxycholate + NAD(+) = 7-oxolithocholate + NADH + H(+). The enzyme catalyses 3beta,7beta-dihydroxy-5beta-cholan-24-oate + NAD(+) = 3beta-hydroxy-7-oxo-5beta-cholan-24-oate + NADH + H(+). The protein operates within amino-acid degradation; L-isoleucine degradation. It functions in the pathway lipid metabolism; fatty acid beta-oxidation. Its pathway is steroid metabolism. It participates in lipid metabolism; bile acid biosynthesis. In terms of biological role, mitochondrial dehydrogenase involved in pathways of fatty acid, branched-chain amino acid and steroid metabolism. Acts as (S)-3-hydroxyacyl-CoA dehydrogenase in mitochondrial fatty acid beta-oxidation, a major degradation pathway of fatty acids. Catalyzes the third step in the beta-oxidation cycle, namely the reversible conversion of (S)-3-hydroxyacyl-CoA to 3-ketoacyl-CoA. Preferentially accepts straight medium- and short-chain acyl-CoA substrates with highest efficiency for (3S)-hydroxybutanoyl-CoA. Acts as 3-hydroxy-2-methylbutyryl-CoA dehydrogenase in branched-chain amino acid catabolic pathway. Catalyzes the oxidation of 3-hydroxy-2-methylbutanoyl-CoA into 2-methyl-3-oxobutanoyl-CoA, a step in isoleucine degradation pathway. Has hydroxysteroid dehydrogenase activity toward steroid hormones and bile acids. Catalyzes the oxidation of 3alpha-, 17beta-, 20beta- and 21-hydroxysteroids and 7alpha- and 7beta-hydroxy bile acids. Oxidizes allopregnanolone/brexanolone at the 3alpha-hydroxyl group, which is known to be critical for the activation of gamma-aminobutyric acid receptors (GABAARs) chloride channel. Has phospholipase C-like activity toward cardiolipin and its oxidized species. Likely oxidizes the 2'-hydroxyl in the head group of cardiolipin to form a ketone intermediate that undergoes nucleophilic attack by water and fragments into diacylglycerol, dihydroxyacetone and orthophosphate. Has higher affinity for cardiolipin with oxidized fatty acids and may degrade these species during the oxidative stress response to protect cells from apoptosis. By interacting with intracellular amyloid-beta, it may contribute to the neuronal dysfunction associated with Alzheimer disease (AD). Essential for structural and functional integrity of mitochondria. In addition to mitochondrial dehydrogenase activity, moonlights as a component of mitochondrial ribonuclease P, a complex that cleaves tRNA molecules in their 5'-ends. Together with TRMT10C/MRPP1, forms a subcomplex of the mitochondrial ribonuclease P, named MRPP1-MRPP2 subcomplex, which displays functions that are independent of the ribonuclease P activity. The MRPP1-MRPP2 subcomplex catalyzes the formation of N(1)-methylguanine and N(1)-methyladenine at position 9 (m1G9 and m1A9, respectively) in tRNAs; HSD17B10/MRPP2 acting as a non-catalytic subunit. The MRPP1-MRPP2 subcomplex also acts as a tRNA maturation platform: following 5'-end cleavage by the mitochondrial ribonuclease P complex, the MRPP1-MRPP2 subcomplex enhances the efficiency of 3'-processing catalyzed by ELAC2, retains the tRNA product after ELAC2 processing and presents the nascent tRNA to the mitochondrial CCA tRNA nucleotidyltransferase TRNT1 enzyme. Associates with mitochondrial DNA complexes at the nucleoids to initiate RNA processing and ribosome assembly. This chain is 3-hydroxyacyl-CoA dehydrogenase type-2 (Hsd17b10), found in Rattus norvegicus (Rat).